The following is an 89-amino-acid chain: Neuropeptide F (89 aa).

The N-terminal stretch at methionine 1–alanine 29 is a signal peptide. Phenylalanine 61 bears the Phenylalanine amide mark. The propeptide occupies glycine 65–arginine 89.

It belongs to the NPY family.

The protein resides in the secreted. Functionally, an integral part of the sensory system that mediates food signaling, providing the neural basis for the regulation of food response; coordinates larval foraging and social behavior changes during development. May have a hormonal role in females. In Anopheles gambiae (African malaria mosquito), this protein is Neuropeptide F.